Reading from the N-terminus, the 962-residue chain is Protease 3 (962 aa).

Residues 1–23 (MPRSIWFKALLLFVALWAPLSQA) form the signal peptide. His88 is a Zn(2+) binding site. Glu91 serves as the catalytic Proton acceptor. Residues His92 and Glu169 each contribute to the Zn(2+) site.

Belongs to the peptidase M16 family. In terms of assembly, monomer. The cofactor is Zn(2+).

Its subcellular location is the periplasm. It carries out the reaction Preferential cleavage of 16-Tyr-|-Leu-17 and 25-Phe-|-Tyr-26 bonds of oxidized insulin B chain. Also acts on other substrates of Mw less than 7 kDa such as insulin and glucagon.. Functionally, endopeptidase that degrades small peptides of less than 7 kDa, such as glucagon and insulin. The protein is Protease 3 (ptrA) of Escherichia coli O6:H1 (strain CFT073 / ATCC 700928 / UPEC).